A 167-amino-acid polypeptide reads, in one-letter code: Crossover junction endodeoxyribonuclease RuvC (167 aa).

Catalysis depends on residues Asp8, Glu68, and Asp140. 3 residues coordinate Mg(2+): Asp8, Glu68, and Asp140.

Belongs to the RuvC family. As to quaternary structure, homodimer which binds Holliday junction (HJ) DNA. The HJ becomes 2-fold symmetrical on binding to RuvC with unstacked arms; it has a different conformation from HJ DNA in complex with RuvA. In the full resolvosome a probable DNA-RuvA(4)-RuvB(12)-RuvC(2) complex forms which resolves the HJ. It depends on Mg(2+) as a cofactor.

Its subcellular location is the cytoplasm. The catalysed reaction is Endonucleolytic cleavage at a junction such as a reciprocal single-stranded crossover between two homologous DNA duplexes (Holliday junction).. Its function is as follows. The RuvA-RuvB-RuvC complex processes Holliday junction (HJ) DNA during genetic recombination and DNA repair. Endonuclease that resolves HJ intermediates. Cleaves cruciform DNA by making single-stranded nicks across the HJ at symmetrical positions within the homologous arms, yielding a 5'-phosphate and a 3'-hydroxyl group; requires a central core of homology in the junction. The consensus cleavage sequence is 5'-(A/T)TT(C/G)-3'. Cleavage occurs on the 3'-side of the TT dinucleotide at the point of strand exchange. HJ branch migration catalyzed by RuvA-RuvB allows RuvC to scan DNA until it finds its consensus sequence, where it cleaves and resolves the cruciform DNA. The sequence is that of Crossover junction endodeoxyribonuclease RuvC from Sinorhizobium medicae (strain WSM419) (Ensifer medicae).